The following is a 132-amino-acid chain: Interleukin-13 (132 aa).

The signal sequence occupies residues 1-18 (MALLLTTVIALTCLGGFA). N38, N49, N57, and N72 each carry an N-linked (GlcNAc...) asparagine glycan. 2 disulfides stabilise this stretch: C48/C76 and C64/C90.

It belongs to the IL-4/IL-13 family. Interacts with IL13RA2.

The protein localises to the secreted. In terms of biological role, cytokine that plays important roles in allergic inflammation and immune response to parasite infection. Synergizes with IL2 in regulating interferon-gamma synthesis. Stimulates B-cell proliferation, and activation of eosinophils, basophils, and mast cells. Plays an important role in controlling IL33 activity by modulating the production of transmembrane and soluble forms of interleukin-1 receptor-like 1/IL1RL1. Displays the capacity to antagonize Th1-driven proinflammatory immune response and downregulates synthesis of many proinflammatory cytokines including IL1, IL6, IL10, IL12 and TNF-alpha through a mechanism that partially involves suppression of NF-kappa-B. Also functions on nonhematopoietic cells, including endothelial cells where it induces vascular cell adhesion protein 1/VCAM1, which is important in the recruitment of eosinophils. Exerts its biological effects through its receptors which comprises the IL4R chain and the IL13RA1 chain, to activate JAK1 and TYK2, leading to the activation of STAT6. Aside from IL13RA1, another receptor IL13RA2 acts as a high affinity decoy for IL13 and mediates internalization and depletion of extracellular IL13. The protein is Interleukin-13 (IL13) of Macaca mulatta (Rhesus macaque).